Consider the following 202-residue polypeptide: 3-isopropylmalate dehydratase small subunit (202 aa).

This sequence belongs to the LeuD family. LeuD type 1 subfamily. In terms of assembly, heterodimer of LeuC and LeuD.

The catalysed reaction is (2R,3S)-3-isopropylmalate = (2S)-2-isopropylmalate. It participates in amino-acid biosynthesis; L-leucine biosynthesis; L-leucine from 3-methyl-2-oxobutanoate: step 2/4. Catalyzes the isomerization between 2-isopropylmalate and 3-isopropylmalate, via the formation of 2-isopropylmaleate. The chain is 3-isopropylmalate dehydratase small subunit from Rhizobium rhizogenes (strain K84 / ATCC BAA-868) (Agrobacterium radiobacter).